A 313-amino-acid polypeptide reads, in one-letter code: Ribosomal RNA small subunit methyltransferase H (313 aa).

S-adenosyl-L-methionine-binding positions include 35–37 (GGY), D53, F80, D101, and Q108.

It belongs to the methyltransferase superfamily. RsmH family.

Its subcellular location is the cytoplasm. The catalysed reaction is cytidine(1402) in 16S rRNA + S-adenosyl-L-methionine = N(4)-methylcytidine(1402) in 16S rRNA + S-adenosyl-L-homocysteine + H(+). Specifically methylates the N4 position of cytidine in position 1402 (C1402) of 16S rRNA. The protein is Ribosomal RNA small subunit methyltransferase H of Acidiphilium cryptum (strain JF-5).